We begin with the raw amino-acid sequence, 162 residues long: Interleukin-15 (162 aa).

The signal sequence occupies residues 1–29 (MRISKPSLRSTSIQCYLCFLLNSHLITEA). Residues 30 to 48 (GIHVFVWGCISAGLPKTEA) constitute a propeptide that is removed on maturation. 2 cysteine pairs are disulfide-bonded: C83–C133 and C90–C136. 2 N-linked (GlcNAc...) asparagine glycosylation sites follow: N119 and N127.

The protein belongs to the IL-15/IL-21 family.

Its subcellular location is the secreted. Functionally, cytokine that plays a major role in the development of inflammatory and protective immune responses to microbial invaders and parasites by modulating immune cells of both the innate and adaptive immune systems. Stimulates the proliferation of natural killer cells, T-cells and B-cells and promotes the secretion of several cytokines. In monocytes, induces the production of IL8 and monocyte chemotactic protein 1/CCL2, two chemokines that attract neutrophils and monocytes respectively to sites of infection. Unlike most cytokines, which are secreted in soluble form, IL15 is expressed in association with its high affinity IL15RA on the surface of IL15-producing cells and delivers signals to target cells that express IL2RB and IL2RG receptor subunits. Binding to its receptor triggers the phosphorylation of JAK1 and JAK3 and the recruitment and subsequent phosphorylation of signal transducer and activator of transcription-3/STAT3 and STAT5. In mast cells, induces the rapid tyrosine phosphorylation of STAT6 and thereby controls mast cell survival and release of cytokines such as IL4. The protein is Interleukin-15 (IL15) of Cavia porcellus (Guinea pig).